Consider the following 238-residue polypeptide: Leucine-rich repeat-containing protein 57 (238 aa).

8 LRR repeats span residues 10 to 36 (LETSQKTGVFQLTGKGLTEFPEDLQKL), 37 to 62 (TANLRTVDLSNNKIEELPAFIGSFQH), 64 to 82 (KSFTISCNKLTSLPNDIGK), 83 to 106 (LKKLETLILNGNQLKQLPSSIGQL), 108 to 128 (SLRTLSLSGNQFKEFPSGLGT), 129 to 152 (LRQLDVLDLSKNQIRVVPAEVAEL), 154 to 173 (AIEINLNQNQISSVTQEVSR), and 174 to 199 (TPRLKVLRLEENCLELSSIPLSILTD).

This Danio rerio (Zebrafish) protein is Leucine-rich repeat-containing protein 57 (lrrc57).